The sequence spans 400 residues: Protein phosphatase methylesterase 1 (400 aa).

The interval 32 to 70 is disordered; that stretch reads DENDGDALGSLPSFNGQSNRNRKYTGKTGSTTDRISSKE. The AB hydrolase-1 domain maps to 114–365; it reads PIFIFHHGAG…DSGHFIQEDS (252 aa). Catalysis depends on residues Ser-205, Asp-233, and His-359.

The protein belongs to the AB hydrolase superfamily. As to quaternary structure, interacts with and inactivates the phosphatase PP2A-like catalytic subunits PPG1, PPH21, PPH22, PPH3 and SIT4.

It carries out the reaction [phosphatase 2A protein]-C-terminal L-leucine methyl ester + H2O = [phosphatase 2A protein]-C-terminal L-leucine + methanol + H(+). Functionally, demethylates proteins that have been reversibly carboxymethylated. Demethylates the phosphatase PP2A catalytic subunits PPH21 and PPH22. Forms inactive complexes (PP2Ai) with phosphatase PP2A-like catalytic subunits. Involved in the regulation of cell cycle progression at START. This chain is Protein phosphatase methylesterase 1 (PPE1), found in Saccharomyces cerevisiae (strain ATCC 204508 / S288c) (Baker's yeast).